Here is a 203-residue protein sequence, read N- to C-terminus: MARFRGSITKVSRRLGVALSPKAEKYLERRPFAPGQHGQSRKGKVSEYALQLREKQKMKYLYGILEKQFRNYYKKAVAQRGVTGDNLVKLLERRLDNVVFRSGFSASRAGARQLVSHGHLVVNGKKVNIPSFQVSPGDLIEFRQRSRNMGAVTDSLSKAPESRFPSWIQVDKANQKAVFLSVPEREDIQEPFNEQLVVELYSK.

In terms of domain architecture, S4 RNA-binding spans 93-173 (RRLDNVVFRS…FPSWIQVDKA (81 aa)).

This sequence belongs to the universal ribosomal protein uS4 family. As to quaternary structure, part of the 30S ribosomal subunit. Contacts protein S5. The interaction surface between S4 and S5 is involved in control of translational fidelity.

In terms of biological role, one of the primary rRNA binding proteins, it binds directly to 16S rRNA where it nucleates assembly of the body of the 30S subunit. Its function is as follows. With S5 and S12 plays an important role in translational accuracy. This chain is Small ribosomal subunit protein uS4, found in Chlorobium limicola (strain DSM 245 / NBRC 103803 / 6330).